A 533-amino-acid chain; its full sequence is D-3-phosphoglycerate dehydrogenase (533 aa).

Residue A2 is modified to N-acetylalanine. S14 bears the Phosphoserine mark. Residue K58 is modified to N6-acetyllysine. Residues T78, 155–156, D175, T207, 234–236, and D260 contribute to the NAD(+) site; these read RI and CAR. At T78 the chain carries Phosphothreonine. Residue R236 is part of the active site. The active site involves E265. H283 acts as the Proton donor in catalysis. An NAD(+)-binding site is contributed by 283 to 286; it reads HLGA.

Belongs to the D-isomer specific 2-hydroxyacid dehydrogenase family. Homotetramer.

It carries out the reaction (2R)-3-phosphoglycerate + NAD(+) = 3-phosphooxypyruvate + NADH + H(+). It catalyses the reaction (R)-2-hydroxyglutarate + NAD(+) = 2-oxoglutarate + NADH + H(+). The enzyme catalyses (S)-malate + NAD(+) = oxaloacetate + NADH + H(+). It participates in amino-acid biosynthesis; L-serine biosynthesis; L-serine from 3-phospho-D-glycerate: step 1/3. Functionally, catalyzes the reversible oxidation of 3-phospho-D-glycerate to 3-phosphonooxypyruvate, the first step of the phosphorylated L-serine biosynthesis pathway. Also catalyzes the reversible oxidation of 2-hydroxyglutarate to 2-oxoglutarate and the reversible oxidation of (S)-malate to oxaloacetate. The chain is D-3-phosphoglycerate dehydrogenase (PHGDH) from Sus scrofa (Pig).